The sequence spans 61 residues: Large ribosomal subunit protein uL30 (61 aa).

The protein belongs to the universal ribosomal protein uL30 family. As to quaternary structure, part of the 50S ribosomal subunit.

This chain is Large ribosomal subunit protein uL30, found in Bifidobacterium longum (strain DJO10A).